Reading from the N-terminus, the 335-residue chain is 4-hydroxythreonine-4-phosphate dehydrogenase (335 aa).

Substrate is bound at residue threonine 132. The a divalent metal cation site is built by histidine 163, histidine 208, and histidine 263. Residues lysine 271, asparagine 280, and arginine 289 each contribute to the substrate site.

Belongs to the PdxA family. In terms of assembly, homodimer. Zn(2+) is required as a cofactor. Mg(2+) serves as cofactor. Requires Co(2+) as cofactor.

The protein localises to the cytoplasm. It carries out the reaction 4-(phosphooxy)-L-threonine + NAD(+) = 3-amino-2-oxopropyl phosphate + CO2 + NADH. Its pathway is cofactor biosynthesis; pyridoxine 5'-phosphate biosynthesis; pyridoxine 5'-phosphate from D-erythrose 4-phosphate: step 4/5. Its function is as follows. Catalyzes the NAD(P)-dependent oxidation of 4-(phosphooxy)-L-threonine (HTP) into 2-amino-3-oxo-4-(phosphooxy)butyric acid which spontaneously decarboxylates to form 3-amino-2-oxopropyl phosphate (AHAP). This chain is 4-hydroxythreonine-4-phosphate dehydrogenase, found in Zymomonas mobilis subsp. mobilis (strain ATCC 31821 / ZM4 / CP4).